Reading from the N-terminus, the 450-residue chain is Phosphoglucosamine mutase (450 aa).

S101 (phosphoserine intermediate) is an active-site residue. Mg(2+) is bound by residues S101, D240, D242, and D244. S101 is subject to Phosphoserine.

The protein belongs to the phosphohexose mutase family. Mg(2+) serves as cofactor. Post-translationally, activated by phosphorylation.

The catalysed reaction is alpha-D-glucosamine 1-phosphate = D-glucosamine 6-phosphate. In terms of biological role, catalyzes the conversion of glucosamine-6-phosphate to glucosamine-1-phosphate. The sequence is that of Phosphoglucosamine mutase from Streptococcus pneumoniae (strain JJA).